Here is a 568-residue protein sequence, read N- to C-terminus: Urease subunit alpha (568 aa).

The 437-residue stretch at 132–568 (GAIDTHVHYI…LPLAQLYNLF (437 aa)) folds into the Urease domain. Residues histidine 137, histidine 139, and lysine 219 each coordinate Ni(2+). Lysine 219 bears the N6-carboxylysine mark. A substrate-binding site is contributed by histidine 221. Residues histidine 248 and histidine 274 each contribute to the Ni(2+) site. Histidine 322 serves as the catalytic Proton donor. Aspartate 362 contacts Ni(2+).

The protein belongs to the metallo-dependent hydrolases superfamily. Urease alpha subunit family. In terms of assembly, heterotrimer of UreA (gamma), UreB (beta) and UreC (alpha) subunits. Three heterotrimers associate to form the active enzyme. Ni cation serves as cofactor. Carboxylation allows a single lysine to coordinate two nickel ions.

Its subcellular location is the cytoplasm. It catalyses the reaction urea + 2 H2O + H(+) = hydrogencarbonate + 2 NH4(+). Its pathway is nitrogen metabolism; urea degradation; CO(2) and NH(3) from urea (urease route): step 1/1. In Azobacteroides pseudotrichonymphae genomovar. CFP2, this protein is Urease subunit alpha.